Reading from the N-terminus, the 82-residue chain is MAKIKSLDVITVAIILLLVIADQATAITVQADCIGPCNDDCQQLCKSKGYTDWTCASFRTKSSCCCKPPRHQIFEQNAQLNN.

Residues 1–26 (MAKIKSLDVITVAIILLLVIADQATA) form the signal peptide. Intrachain disulfides connect C33–C66, C37–C55, C41–C64, and C45–C65.

This sequence belongs to the DEFL family.

The protein localises to the secreted. The protein is Defensin-like protein 75 (LCR45) of Arabidopsis thaliana (Mouse-ear cress).